Consider the following 1113-residue polypeptide: Histone deacetylase 5 (1113 aa).

Residues 1–22 form a disordered region; that stretch reads MNSPNESDGMSGREPSLGILPR. A Glycyl lysine isopeptide (Lys-Gly) (interchain with G-Cter in SUMO2) cross-link involves residue K35. Disordered stretches follow at residues 39–63 and 187–272; these read PGAMPSSMGGGGGGSPSPVELRGAL and KEPT…SSPL. The segment covering 238 to 249 has biased composition (basic and acidic residues); the sequence is DSRDDFPLRKTA. S250 is modified (phosphoserine; by AMPK, CaMK1, SIK1 and PKD/PRKD1). Over residues 263–272 the composition is skewed to basic and acidic residues; the sequence is KVAERRSSPL. T283 bears the Phosphothreonine; by PKC mark. The interval 472 to 494 is disordered; sequence RTVGKLPRHRPLSRTQSSPLPQS. Residues 484–494 show a composition bias toward low complexity; the sequence is SRTQSSPLPQS. The residue at position 488 (S488) is a Phosphoserine; by AMPK, CaMK1, SIK1 and PKD/PRKD1. K523 bears the N6-acetyllysine mark. Positions 526–611 are disordered; it reads TKTGELSRQP…PDEGPDLEES (86 aa). Residues 571–610 show a composition bias toward acidic residues; that stretch reads STQEDLEEEEEEEEEEEEDCIQVKDEDGESGPDEGPDLEE. Residues S600 and S650 each carry the phosphoserine modification. Positions 675 to 1019 are histone deacetylase; it reads GVVYDTFMLK…VSALLSVELQ (345 aa). Zn(2+)-binding residues include C687, C689, H695, and C772. Residue H824 is part of the active site. The Nuclear export signal signature appears at 1072 to 1113; that stretch reads EEAETVSAMALLSVGAEQAQAVATQEHSPRPAEEPMEQEPAL. Positions 1088–1113 are disordered; sequence EQAQAVATQEHSPRPAEEPMEQEPAL. Residue S1099 is modified to Phosphoserine.

It belongs to the histone deacetylase family. HD type 2 subfamily. In terms of assembly, interacts with AHRR, BAHD1, BCOR, HDAC7, HDAC9, CTBP1, MEF2C, NCOR2, NRIP1, PHB2 and a 14-3-3 chaperone protein. Interacts with BCL6, DDIT3/CHOP, GRK5, KDM5B and MYOCD. Interacts with EP300 in the presence of TFAP2C. Interacts with ANKRA2. Interacts with CUL7 (as part of the 3M complex); negatively regulated by ANKRA2. Interacts with ZBTB7B; the interaction allows the recruitment of HDAC4 on CD8 loci for deacetylation and possible inhibition of CD8 genes expression. Interacts with RARA. Phosphorylated by AMPK, CaMK1, SIK1 and PRKD1 at Ser-250 and Ser-488. The phosphorylation is required for the export to the cytoplasm and inhibition. Phosphorylated by the PKC kinases PKN1 and PKN2, impairing nuclear import. Phosphorylated by GRK5, leading to nuclear export of HDAC5 and allowing MEF2-mediated transcription. Post-translationally, ubiquitinated. Polyubiquitination however does not lead to its degradation.

It is found in the nucleus. The protein resides in the cytoplasm. The catalysed reaction is N(6)-acetyl-L-lysyl-[histone] + H2O = L-lysyl-[histone] + acetate. In terms of biological role, responsible for the deacetylation of lysine residues on the N-terminal part of the core histones (H2A, H2B, H3 and H4). Histone deacetylation gives a tag for epigenetic repression and plays an important role in transcriptional regulation, cell cycle progression and developmental events. Histone deacetylases act via the formation of large multiprotein complexes. Involved in muscle maturation by repressing transcription of myocyte enhancer MEF2C. During muscle differentiation, it shuttles into the cytoplasm, allowing the expression of myocyte enhancer factors. Serves as a corepressor of RARA and causes its deacetylation. In association with RARA, plays a role in the repression of microRNA-10a and thereby in the inflammatory response. The sequence is that of Histone deacetylase 5 (Hdac5) from Mus musculus (Mouse).